The sequence spans 254 residues: Small ribosomal subunit protein uS2 (254 aa).

Belongs to the universal ribosomal protein uS2 family.

This Legionella pneumophila (strain Corby) protein is Small ribosomal subunit protein uS2.